Here is a 385-residue protein sequence, read N- to C-terminus: L-arabinitol 4-dehydrogenase (385 aa).

Zn(2+) contacts are provided by Cys-54, His-79, Glu-80, Cys-109, Cys-112, Cys-115, Cys-123, and Glu-164. NAD(+) is bound by residues 191–192 (PI), Asp-212, Arg-217, Ile-292, and 316–318 (QYR).

It belongs to the zinc-containing alcohol dehydrogenase family. Homotetramer. It depends on Zn(2+) as a cofactor.

The enzyme catalyses L-arabinitol + NAD(+) = L-xylulose + NADH + H(+). It functions in the pathway carbohydrate degradation; L-arabinose degradation via L-arabinitol; D-xylulose 5-phosphate from L-arabinose (fungal route): step 2/5. Its function is as follows. Catalyzes the NAD-dependent oxidation of L-arabinitol to L-xylulose in the fungal L-arabinose catabolic pathway. L-arabinose catabolism is important for using plant material as a carbon source. NADP cannot act as a cosubstrate. The chain is L-arabinitol 4-dehydrogenase (lad1) from Penicillium rubens (strain ATCC 28089 / DSM 1075 / NRRL 1951 / Wisconsin 54-1255) (Penicillium chrysogenum).